We begin with the raw amino-acid sequence, 169 residues long: Ribosome maturation factor RimM (169 aa).

Residues 97–169 (EDEYYWTDLV…TITADWGLDY (73 aa)) enclose the PRC barrel domain.

Belongs to the RimM family. Binds ribosomal protein uS19.

The protein localises to the cytoplasm. Its function is as follows. An accessory protein needed during the final step in the assembly of 30S ribosomal subunit, possibly for assembly of the head region. Essential for efficient processing of 16S rRNA. May be needed both before and after RbfA during the maturation of 16S rRNA. It has affinity for free ribosomal 30S subunits but not for 70S ribosomes. This Neisseria meningitidis serogroup B (strain ATCC BAA-335 / MC58) protein is Ribosome maturation factor RimM.